Consider the following 274-residue polypeptide: Ribosomal RNA small subunit methyltransferase A (274 aa).

The S-adenosyl-L-methionine site is built by H15, L17, G42, E64, D89, and N108.

This sequence belongs to the class I-like SAM-binding methyltransferase superfamily. rRNA adenine N(6)-methyltransferase family. RsmA subfamily.

Its subcellular location is the cytoplasm. The enzyme catalyses adenosine(1518)/adenosine(1519) in 16S rRNA + 4 S-adenosyl-L-methionine = N(6)-dimethyladenosine(1518)/N(6)-dimethyladenosine(1519) in 16S rRNA + 4 S-adenosyl-L-homocysteine + 4 H(+). Its function is as follows. Specifically dimethylates two adjacent adenosines (A1518 and A1519) in the loop of a conserved hairpin near the 3'-end of 16S rRNA in the 30S particle. May play a critical role in biogenesis of 30S subunits. The chain is Ribosomal RNA small subunit methyltransferase A from Prochlorococcus marinus (strain MIT 9215).